We begin with the raw amino-acid sequence, 166 residues long: Immunity protein RhsIB (166 aa).

In terms of biological role, immunity component of a toxin-immunity protein module, which functions as a cellular contact-dependent growth inhibition (CDI) system. Specifically inhibits its cognate toxin RhsB. Cell contact is necessary for growth inhibition. The polypeptide is Immunity protein RhsIB (rhsIB) (Dickeya dadantii (strain 3937) (Erwinia chrysanthemi (strain 3937))).